The following is a 481-amino-acid chain: Sucrose phosphorylase (481 aa).

Sucrose is bound by residues D49, H87, 191–193 (RLD), E234, 291–292 (HD), 335–338 (DIYQ), and R392. D193 (nucleophile) is an active-site residue. Residue E234 is the Proton donor of the active site.

The protein belongs to the glycosyl hydrolase 13 family. Sucrose phosphorylase subfamily.

The protein resides in the cytoplasm. It catalyses the reaction sucrose + phosphate = D-fructose + alpha-D-glucose 1-phosphate. Functionally, intracellular catabolism of sucrose. Being intracellular, probably not involved in synthesis of extracellular polysaccharides. The chain is Sucrose phosphorylase from Streptococcus mutans serotype c (strain ATCC 700610 / UA159).